We begin with the raw amino-acid sequence, 276 residues long: Kallikrein-11 (276 aa).

Residues 1–44 (MRRLKSDWKLSTETREPGARPALLQARMILRLIALALVTGHVGG) form the signal peptide. The propeptide at 45-47 (ETR) is activation peptide. The region spanning 48–274 (IIKGYECRPH…YFNWIHEVMR (227 aa)) is the Peptidase S1 domain. 5 disulfide bridges follow: Cys54–Cys189, Cys73–Cys89, Cys168–Cys235, Cys200–Cys214, and Cys225–Cys250. His88 acts as the Charge relay system in catalysis. N-linked (GlcNAc...) asparagine glycosylation occurs at Asn125. Asp136 serves as the catalytic Charge relay system. Asn191 and Asn207 each carry an N-linked (GlcNAc...) asparagine glycan. Residue Ser229 is the Charge relay system of the active site. Asn236 carries N-linked (GlcNAc...) asparagine glycosylation.

It belongs to the peptidase S1 family. Kallikrein subfamily. Expressed in brain and prostate (isoform 1) and prostate (isoform 2).

It is found in the secreted. Possible multifunctional protease. Efficiently cleaves 'bz-Phe-Arg-4-methylcoumaryl-7-amide', a kallikrein substrate, and weakly cleaves other substrates for kallikrein and trypsin. The polypeptide is Kallikrein-11 (Klk11) (Mus musculus (Mouse)).